The chain runs to 81 residues: Small cysteine-rich protein 1 2 (81 aa).

A signal peptide spans 1-19 (MGVNFNICLLLLLVATISS). A propeptide spanning residues 20 to 39 (QPLKATEKDDSTDENPFGIY) is cleaved from the precursor.

This sequence belongs to the Cnidaria small cysteine-rich protein (SCRiP) family. alpha subfamily. In terms of processing, the basic myotoxic domain of rattlesnake crotamine toxins (with 6 Cys residues) has been detected in this protein. However, this protein contains 2 additional Cys at the C-terminal region. Hence, this protein may contain 4 disulfide bonds instead of the 3 suggested by the myotoxin domain.

It localises to the secreted. It is found in the nematocyst. In terms of biological role, induces neurotoxic symptoms on zebrafish. Has also been claimed to be implied in calcification, but tests on homolog proteins suggest that proteins of this family have a neurotoxic function and not a calcification function. This chain is Small cysteine-rich protein 1 2, found in Montipora capitata (Rice coral).